A 585-amino-acid chain; its full sequence is Chaperonin CPN60-like 1, mitochondrial (585 aa).

Residues 1 to 32 (MYRLVSNVASKARIARKCTSQIGSRLNSTRNY) constitute a mitochondrion transit peptide.

Belongs to the chaperonin (HSP60) family.

The protein localises to the mitochondrion. In terms of biological role, implicated in mitochondrial protein import and macromolecular assembly. May facilitate the correct folding of imported proteins. May also prevent misfolding and promote the refolding and proper assembly of unfolded polypeptides generated under stress conditions in the mitochondrial matrix. This is Chaperonin CPN60-like 1, mitochondrial from Arabidopsis thaliana (Mouse-ear cress).